The sequence spans 547 residues: Mucin-13 (547 aa).

The span at 1 to 210 (MSQSSGGTST…TVTSSSSTGS (210 aa)) shows a compositional bias: low complexity. Positions 1–218 (MSQSSGGTST…GSNDPCNSNP (218 aa)) are disordered. Residues 210–249 (SNDPCNSNPCKSPASCVKLYDSYFCLCLEGYYYNNSSSCV) form the EGF-like 1 domain. 3 disulfide bridges follow: Cys-214-Cys-225, Cys-219-Cys-234, and Cys-236-Cys-248. N-linked (GlcNAc...) asparagine glycans are attached at residues Asn-243, Asn-244, and Asn-263. An SEA domain is found at 250 to 366 (KGTTFPGEIG…ERYFQQDRCD (117 aa)). EGF-like domains are found at residues 361 to 401 (QQDR…PFCV) and 401 to 441 (VAPT…GKCE). Disulfide bonds link Cys-365–Cys-378, Cys-370–Cys-384, Cys-386–Cys-400, Cys-409–Cys-427, and Cys-429–Cys-440. Residues 459–479 (ILTIVGTIAGAFILILLIVFI) form a helical membrane-spanning segment. Topologically, residues 480–547 (VSMRSKNKKK…NHRSMPRPDY (68 aa)) are cytoplasmic. The segment at 525 to 547 (KTGVPSQTSNPYANHRSMPRPDY) is disordered.

As to quaternary structure, homodimer of beta subunits. In terms of processing, cleaved into two subunits, alpha and beta, probably between the first EGF domain and the SEA domain. Beta subunit contains the cytoplasmic tail and alpha subunit the extracellular tail. The homooligomerization into dimers is dependent on intrachain disulfide bonds. Post-translationally, highly glycosylated.

The protein localises to the cell membrane. It is found in the secreted. Epithelial and hemopoietic transmembrane mucin that may play a role in cell signaling. The polypeptide is Mucin-13 (Muc13) (Rattus norvegicus (Rat)).